The sequence spans 683 residues: DNA ligase (683 aa).

NAD(+) contacts are provided by residues 35–39 (DAEYD), 81–82 (SL), and E112. The N6-AMP-lysine intermediate role is filled by K114. Residues R135, E170, K277, and K301 each coordinate NAD(+). 4 residues coordinate Zn(2+): C395, C398, C411, and C417. The region spanning 601–683 (SSNSVLNNKV…YRMINSEVSE (83 aa)) is the BRCT domain.

It belongs to the NAD-dependent DNA ligase family. LigA subfamily. Requires Mg(2+) as cofactor. The cofactor is Mn(2+).

The catalysed reaction is NAD(+) + (deoxyribonucleotide)n-3'-hydroxyl + 5'-phospho-(deoxyribonucleotide)m = (deoxyribonucleotide)n+m + AMP + beta-nicotinamide D-nucleotide.. Its function is as follows. DNA ligase that catalyzes the formation of phosphodiester linkages between 5'-phosphoryl and 3'-hydroxyl groups in double-stranded DNA using NAD as a coenzyme and as the energy source for the reaction. It is essential for DNA replication and repair of damaged DNA. The protein is DNA ligase of Wolbachia sp. subsp. Brugia malayi (strain TRS).